Here is a 173-residue protein sequence, read N- to C-terminus: Signal peptidase complex catalytic subunit sec11 (173 aa).

Topologically, residues 1–15 (MLGIADMQPRQLAAQ) are cytoplasmic. A helical; Signal-anchor for type II membrane protein membrane pass occupies residues 16-36 (ILNFALVLSTAFMMWKGLSVV). Residues 37-173 (SDSPSPIVVV…MGVMVVLQRE (137 aa)) are Lumenal-facing. Catalysis depends on charge relay system residues Ser50, His89, and Asp115. A C-terminal short (CTS) helix region spans residues 159-170 (VMLGLMGVMVVL).

The protein belongs to the peptidase S26B family. In terms of assembly, component of the signal peptidase complex (SPC) composed of a catalytic subunit SEC11 and three accessory subunits SPC1, SPC2 and SPC3. The complex induces a local thinning of the ER membrane which is used to measure the length of the signal peptide (SP) h-region of protein substrates. This ensures the selectivity of the complex towards h-regions shorter than 18-20 amino acids. SPC associates with the translocon complex.

It localises to the endoplasmic reticulum membrane. It catalyses the reaction Cleavage of hydrophobic, N-terminal signal or leader sequences from secreted and periplasmic proteins.. Functionally, catalytic component of the signal peptidase complex (SPC) which catalyzes the cleavage of N-terminal signal sequences from nascent proteins as they are translocated into the lumen of the endoplasmic reticulum. Specifically cleaves N-terminal signal peptides that contain a hydrophobic alpha-helix (h-region) shorter than 18-20 amino acids. This Pyrenophora tritici-repentis (strain Pt-1C-BFP) (Wheat tan spot fungus) protein is Signal peptidase complex catalytic subunit sec11 (sec11).